A 222-amino-acid polypeptide reads, in one-letter code: UPF0758 protein YicR (222 aa).

One can recognise an MPN domain in the interval 100–222 (PLLSPEMTRE…YVSFAERGWI (123 aa)). Positions 171, 173, and 184 each coordinate Zn(2+). The short motif at 171–184 (HNHPSGCAEPSKAD) is the JAMM motif element.

It belongs to the UPF0758 family. YicR subfamily.

The polypeptide is UPF0758 protein YicR (Escherichia coli (strain 55989 / EAEC)).